The chain runs to 90 residues: Large ribosomal subunit protein eL34 (90 aa).

Positions 36, 39, 72, and 75 each coordinate Zn(2+). The disordered stretch occupies residues 41–72 (RPLNGVPRGRPSELRKLPKTKKRPERPYPNLC).

This sequence belongs to the eukaryotic ribosomal protein eL34 family. In terms of assembly, part of the 50S ribosomal subunit. The cofactor is Zn(2+).

The sequence is that of Large ribosomal subunit protein eL34 from Thermococcus kodakarensis (strain ATCC BAA-918 / JCM 12380 / KOD1) (Pyrococcus kodakaraensis (strain KOD1)).